A 288-amino-acid chain; its full sequence is MLKQRVLSAIVLIAAVLCALFLFTPFYFALALGAVAILGIWEWTQFARLKQPLIRFFVTTFLGVFIFLWLYTEGNYLDAGRVFEQHLQLLLINAVSWWGLALLLVISYPKSAKFWSKNPLLQLLFAFSTLIPFVAGVLRLRLEHYTHDPYHGLFLLLYVFILVWAADSGAYFSGRAFGKRKLAPKVSPGKSWEGVIGGLITALVLAFIFIHFSNNTLVGDRNITGFIILSVATVAISVLGDLTESMFKRESGVKDSSQLIPGHGGVLDRIDSLTAAVPFFSYFYFFVL.

The next 7 helical transmembrane spans lie at 10–30 (IVLI…YFAL), 52–72 (PLIR…WLYT), 89–109 (LLLI…ISYP), 118–138 (NPLL…AGVL), 152–172 (GLFL…GAYF), 192–212 (WEGV…FIHF), and 223–243 (ITGF…GDLT).

The protein belongs to the CDS family.

It is found in the cell inner membrane. The catalysed reaction is a 1,2-diacyl-sn-glycero-3-phosphate + CTP + H(+) = a CDP-1,2-diacyl-sn-glycerol + diphosphate. Its pathway is phospholipid metabolism; CDP-diacylglycerol biosynthesis; CDP-diacylglycerol from sn-glycerol 3-phosphate: step 3/3. The polypeptide is Phosphatidate cytidylyltransferase (cdsA) (Haemophilus influenzae (strain ATCC 51907 / DSM 11121 / KW20 / Rd)).